We begin with the raw amino-acid sequence, 547 residues long: Chaperonin GroEL (547 aa).

Residues 30–33, K51, 87–91, G415, and D495 each bind ATP; these read TLGP and DGTTT.

It belongs to the chaperonin (HSP60) family. Forms a cylinder of 14 subunits composed of two heptameric rings stacked back-to-back. Interacts with the co-chaperonin GroES.

The protein localises to the cytoplasm. The enzyme catalyses ATP + H2O + a folded polypeptide = ADP + phosphate + an unfolded polypeptide.. Its function is as follows. Together with its co-chaperonin GroES, plays an essential role in assisting protein folding. The GroEL-GroES system forms a nano-cage that allows encapsulation of the non-native substrate proteins and provides a physical environment optimized to promote and accelerate protein folding. This chain is Chaperonin GroEL, found in Ralstonia nicotianae (strain ATCC BAA-1114 / GMI1000) (Ralstonia solanacearum).